Reading from the N-terminus, the 252-residue chain is Putative peptide zinc metalloprotease protein YydH (252 aa).

The next 2 helical transmembrane spans lie at Phe-56 to Ile-76 and Val-85 to Leu-105. His-106 is a binding site for Zn(2+). The active site involves Glu-107. His-110 contributes to the Zn(2+) binding site. 3 helical membrane-spanning segments follow: residues Ile-152 to Ile-172, Ala-181 to Leu-201, and Ile-231 to Val-251.

It belongs to the peptidase M50B family. Zn(2+) is required as a cofactor.

It is found in the cell membrane. Functionally, required for production of the modified peptide YydF. May process the precursor form of YydF to release the active peptide (Potential). This Bacillus subtilis (strain 168) protein is Putative peptide zinc metalloprotease protein YydH (yydH).